Here is a 318-residue protein sequence, read N- to C-terminus: BRISC and BRCA1-A complex member 1 (318 aa).

The tract at residues 1 to 67 (MDTSEPLEEG…TTAVPTNCTP (67 aa)) is disordered. Positions 9-18 (EGDRTHEQRP) are enriched in basic and acidic residues. Residues 86-287 (VIICLDLSEE…LELHNCMARL (202 aa)) are VWFA-like.

Belongs to the BABAM1 family. In terms of assembly, component of the ARISC complex, at least composed of uimc1/rap80, abraxas1, brcc3/brcc36, BABAM2 and babam1/nba1. Component of the BRCA1-A complex, at least composed of brca1, bard1, uimc1/rap80, abraxas1, brcc3/brcc36, BABAM2 and babam1/nba1. In the BRCA1-A complex, interacts directly with abraxas1 and BABAM2. Component of the BRISC complex, at least composed of abraxas2, brcc3/brcc36, babam2 and babam1/nba1.

Its subcellular location is the cytoplasm. The protein localises to the nucleus. Functionally, component of the BRCA1-A complex, a complex that specifically recognizes 'Lys-63'-linked ubiquitinated histones H2A and H2AX at DNA lesions sites, leading to target the BRCA1-BARD1 heterodimer to sites of DNA damage at double-strand breaks (DSBs). The BRCA1-A complex also possesses deubiquitinase activity that specifically removes 'Lys-63'-linked ubiquitin on histones H2A and H2AX. In the BRCA1-A complex, it is required for the complex integrity and its localization at DSBs. Component of the BRISC complex, a multiprotein complex that specifically cleaves 'Lys-63'-linked ubiquitin in various substrates. In these 2 complexes, it is probably required to maintain the stability of BABAM2 and help the 'Lys-63'-linked deubiquitinase activity mediated by brcc3/brcc36 component. The BRISC complex is required for normal mitotic spindle assembly and microtubule attachment to kinetochores via its role in deubiquitinating numa1. Plays a role in interferon signaling via its role in the deubiquitination of the interferon receptor ifnar1; deubiquitination increases ifnar1 activity by enhancing its stability and cell surface expression. Down-regulates the response to bacterial lipopolysaccharide (LPS) via its role in ifnar1 deubiquitination. In Xenopus tropicalis (Western clawed frog), this protein is BRISC and BRCA1-A complex member 1 (babam1).